The following is a 146-amino-acid chain: Ribonuclease H (146 aa).

Residues 1 to 143 (MKEIIIYTDG…CDQLARNAIK (143 aa)) enclose the RNase H type-1 domain. Mg(2+) is bound by residues Asp9, Glu47, Asp70, and Asp135.

The protein belongs to the RNase H family. Monomer. Mg(2+) serves as cofactor.

It is found in the cytoplasm. It carries out the reaction Endonucleolytic cleavage to 5'-phosphomonoester.. Endonuclease that specifically degrades the RNA of RNA-DNA hybrids. This Syntrophomonas wolfei subsp. wolfei (strain DSM 2245B / Goettingen) protein is Ribonuclease H.